An 845-amino-acid polypeptide reads, in one-letter code: MSEVTVRQLADVVGTPVGRLLEQLREAGIGVDREDAAITEAQKLQLLRYLRHSHGASVEIATPKRITLNRRSHSEIQVNAGGGRSKTVNVEVRKKRTYIKRSAILEQERLAERQREEEEAQAGVQAQQEREARLIAEEEAKRQAAEEEAKRQAAEEEAKRQAAEEEAKRQAEAQVKRRLDVEKKPKNGLEPARTEKPASRKAKPRFRSEDRESEQKQRGTKFGRKELHIAPGKAGTSKRKKFRPQKAAPAAKHGFERPTAPIVHDVSIPETMTVAELAQKMSVKAAEVIKALMKLGIMATINQVLDQDTATIVVEEMGHKPKRLQENTLELELVQAEQEVSRQVSRAAVVTIMGHVDHGKTSLLDYIRRAKVATSEAGGITQHIGAYKVRSDKGEITFIDTPGHAAFTAMRARGAKVTDIVILVVAADDGAMPQTVEAIQHARAAGAPLVVAVNKIDRPDADPDRVKQELANHDVITEEWGGDTQFVNVSAKTGEGIDDLIEAILLQAEVMEIKVSAEGPARGVVIESRLDKGRGPVATILVQSGTLRKGDILLSGVETGRVRAMLTERGQEIIEAGPSTPVEILGLSGTPNAGDEAVVVPDERRAREIAGHRQAKEREVKLARQQSAKLENMFNEMEEGEIRALNLVIKADVQGSAEALSDSLTKLSTDKARVKVVAAGVGGINETDVNLAVASNAVIIGFNVRADAAARRLIAEKGIDLHYYSVIYNAIDEIKGALIGILDPEYREEIIGLARVDDVFRSPKLGAIAGCLVIEGSVRRNNPIRVLRDNIVVFEGQLESLRRFKDDVQEVRAGTECGIGVKDYKDVKVGDQIEVYERVRKEPAL.

2 stretches are compositionally biased toward basic and acidic residues: residues 139–198 (EAKR…EKPA) and 206–228 (FRSE…KELH). The tract at residues 139–253 (EAKRQAAEEE…PQKAAPAAKH (115 aa)) is disordered. The 168-residue stretch at 345-512 (SRAAVVTIMG…AILLQAEVME (168 aa)) folds into the tr-type G domain. The G1 stretch occupies residues 354-361 (GHVDHGKT). Position 354–361 (354–361 (GHVDHGKT)) interacts with GTP. The interval 379 to 383 (GITQH) is G2. Residues 400–403 (DTPG) form a G3 region. Residues 400–404 (DTPGH) and 454–457 (NKID) contribute to the GTP site. Residues 454–457 (NKID) form a G4 region. Positions 490 to 492 (SAK) are G5.

This sequence belongs to the TRAFAC class translation factor GTPase superfamily. Classic translation factor GTPase family. IF-2 subfamily.

Its subcellular location is the cytoplasm. In terms of biological role, one of the essential components for the initiation of protein synthesis. Protects formylmethionyl-tRNA from spontaneous hydrolysis and promotes its binding to the 30S ribosomal subunits. Also involved in the hydrolysis of GTP during the formation of the 70S ribosomal complex. In Nitrosococcus oceani (strain ATCC 19707 / BCRC 17464 / JCM 30415 / NCIMB 11848 / C-107), this protein is Translation initiation factor IF-2.